We begin with the raw amino-acid sequence, 46 residues long: Defensin Tk-AMP-D6.1 (46 aa).

Disulfide bonds link cysteine 3–cysteine 46, cysteine 14–cysteine 34, cysteine 20–cysteine 40, and cysteine 24–cysteine 42.

In terms of biological role, plant defense peptide. The chain is Defensin Tk-AMP-D6.1 from Triticum kiharae (Wheat).